We begin with the raw amino-acid sequence, 316 residues long: Alpha- and gamma-adaptin-binding protein p34 (316 aa).

The disordered stretch occupies residues 198–232; that stretch reads ASAESCHSEQQEPSPTAERTESLPGHHSGACGSAG. Low complexity predominate over residues 222–232; the sequence is GHHSGACGSAG. Residues S311 and S312 each carry the phosphoserine modification.

In terms of assembly, associated with AP-1 and AP-2 complexes.

It is found in the cytoplasm. The protein localises to the cytosol. In terms of biological role, may be involved in endocytic recycling of growth factor receptors such as EGFR. This chain is Alpha- and gamma-adaptin-binding protein p34 (Aagab), found in Mus musculus (Mouse).